A 284-amino-acid polypeptide reads, in one-letter code: MLIIETLPLLRQHIRRLRQEGKRVALVPTMGNLHDGHMKLVDEAKARADVVIVSIFVNPMQFDRPDDLVRYPRTLQEDCEKLNKRKVDYVFAPAVEEIYPQGLEGQTYVDVPGLSTMLEGASRPGHFRGVSTIVSKLFNLIQPDIACFGEKDFQQLALIRKMVADMSYDIEIVGVPIIRAKDGLALSSRNAYLTAEQRKIAPGLYNVMNSIAEKLIAGNRELQEIIAIAEQELNEKGFRADDIQIRDADTLQELTETSKRAVILAAAWLGQARLIDNQSVTLAQ.

30–37 (MGNLHDGH) provides a ligand contact to ATP. The active-site Proton donor is the His-37. A (R)-pantoate-binding site is contributed by Gln-61. Gln-61 contacts beta-alanine. An ATP-binding site is contributed by 149–152 (GEKD). Gln-155 contacts (R)-pantoate. Residues Ile-178 and 186-189 (LSSR) each bind ATP.

The protein belongs to the pantothenate synthetase family. Homodimer.

It is found in the cytoplasm. The enzyme catalyses (R)-pantoate + beta-alanine + ATP = (R)-pantothenate + AMP + diphosphate + H(+). It participates in cofactor biosynthesis; (R)-pantothenate biosynthesis; (R)-pantothenate from (R)-pantoate and beta-alanine: step 1/1. In terms of biological role, catalyzes the condensation of pantoate with beta-alanine in an ATP-dependent reaction via a pantoyl-adenylate intermediate. This Salmonella choleraesuis (strain SC-B67) protein is Pantothenate synthetase.